Here is a 382-residue protein sequence, read N- to C-terminus: Lipid-A-disaccharide synthase (382 aa).

The protein belongs to the LpxB family.

The enzyme catalyses 2-N,3-O-bis[(3R)-3-hydroxytetradecanoyl]-alpha-D-glucosaminyl 1-phosphate + UDP-2-N,3-O-bis[(3R)-3-hydroxytetradecanoyl]-alpha-D-glucosamine = lipid A disaccharide (E. coli) + UDP + H(+). It catalyses the reaction a lipid X + a UDP-2-N,3-O-bis[(3R)-3-hydroxyacyl]-alpha-D-glucosamine = a lipid A disaccharide + UDP + H(+). Its pathway is glycolipid biosynthesis; lipid IV(A) biosynthesis; lipid IV(A) from (3R)-3-hydroxytetradecanoyl-[acyl-carrier-protein] and UDP-N-acetyl-alpha-D-glucosamine: step 5/6. Its function is as follows. Condensation of UDP-2,3-diacylglucosamine and 2,3-diacylglucosamine-1-phosphate to form lipid A disaccharide, a precursor of lipid A, a phosphorylated glycolipid that anchors the lipopolysaccharide to the outer membrane of the cell. The sequence is that of Lipid-A-disaccharide synthase from Escherichia fergusonii (strain ATCC 35469 / DSM 13698 / CCUG 18766 / IAM 14443 / JCM 21226 / LMG 7866 / NBRC 102419 / NCTC 12128 / CDC 0568-73).